We begin with the raw amino-acid sequence, 245 residues long: Type II restriction enzyme MjaIV (245 aa).

It carries out the reaction Endonucleolytic cleavage of DNA to give specific double-stranded fragments with terminal 5'-phosphates.. Functionally, a P subtype restriction enzyme that recognizes the double-stranded sequence 5'-GTNNAC-3'; the cleavage site is unknown. In Methanocaldococcus jannaschii (strain ATCC 43067 / DSM 2661 / JAL-1 / JCM 10045 / NBRC 100440) (Methanococcus jannaschii), this protein is Type II restriction enzyme MjaIV (mjaIVR).